We begin with the raw amino-acid sequence, 348 residues long: (+)-germacrene D synthase (348 aa).

Positions 97, 101, 242, and 246 each coordinate Mg(2+). The DDXXD motif motif lies at 97–101 (DDILD).

This sequence belongs to the terpene synthase family. Mg(2+) serves as cofactor.

The catalysed reaction is (2E,6E)-farnesyl diphosphate = (+)-germacrene D + diphosphate. Its pathway is secondary metabolite biosynthesis; terpenoid biosynthesis. In terms of biological role, sesquiterpene synthase converting farnesyl diphosphate to eight sesquiterpenes, with (+)-germacrene D and an unidentified oxygenated sesquiterpene as the major products. Has no diterpene synthase activity. In Selaginella moellendorffii (Spikemoss), this protein is (+)-germacrene D synthase.